The sequence spans 336 residues: Izumo sperm-egg fusion protein 1 (336 aa).

The signal sequence occupies residues 1–16 (MTLPILLGWFLTLCSS). In terms of domain architecture, Ig-like C2-type spans 158–247 (PPLDCGEHHL…LKDQKGTALS (90 aa)). An intrachain disulfide couples cysteine 179 to cysteine 236. Residues 287 to 307 (SFLTVLILLTVLSITGSLIII) form a helical membrane-spanning segment.

Belongs to the Izumo family. Forms a complex with tmem81 and spaca6 on spermatocyte cell membrane. The complex binds to oocyte protein bncr. Expressed in sperm.

The protein localises to the cell membrane. It is found in the cytoplasmic vesicle. Its subcellular location is the secretory vesicle. The protein resides in the acrosome membrane. In terms of biological role, essential sperm cell-surface protein required for fertilization by acting as a ligand for bncr receptor on egg. The interaction of the complex izumo1:spaca6:tmemt81 with bncr is a necessary adhesion event between sperm and egg that is required for fertilization. The chain is Izumo sperm-egg fusion protein 1 from Danio rerio (Zebrafish).